The sequence spans 4303 residues: Polycystin-1 (4303 aa).

The first 23 residues, 1–23 (MPPAAPARLALALGLGLWLGALA), serve as a signal peptide directing secretion. Positions 24–67 (GGPGRGCGPCEPPCLCGPAPGAACRVNCSGRGLRTLGPALRIPA) constitute an LRRNT domain. The Extracellular portion of the chain corresponds to 24-3074 (GGPGRGCGPC…VFPEPTADVN (3051 aa)). N-linked (GlcNAc...) asparagine glycans are attached at residues N50 and N89. LRR repeat units lie at residues 68–91 (DATA…ANLS) and 92–113 (ALAE…IFAN). N-linked (GlcNAc...) asparagine glycans are attached at residues N116 and N121. The 54-residue stretch at 125–178 (NPFECDCGLAWLPRWAEEQQVRVVQPEAATCAGPGSLAGQPLLGIPLLDSGCGE) folds into the LRRCT domain. Positions 177–271 (GEEYVACLPD…PTLLQHVFPA (95 aa)) constitute a WSC domain. Residue N187 is glycosylated (N-linked (GlcNAc...) asparagine). A PKD 1 domain is found at 272–359 (SPGATLVGPH…VQVEAAPAAL (88 aa)). Residues 415–531 (GNGHCYRLVV…CSAPHSYVCE (117 aa)) enclose the C-type lectin domain. 2 cysteine pairs are disulfide-bonded: C436–C530 and C508–C522. The segment at 616–635 (AGTPENGSEPESRSPDNRTQ) is disordered. 2 N-linked (GlcNAc...) asparagine glycosylation sites follow: N621 and N632. The LDL-receptor class A; atypical domain occupies 638-671 (PACMPGGRWCPGANICLPLDASCHPQACANGCTS). 3 cysteine pairs are disulfide-bonded: C640-C653, C647-C665, and C660-C669. One can recognise a PKD 2 domain in the interval 743–817 (LSANASSWLP…RHNLSCSFDV (75 aa)). N746, N810, N841, N854, N890, N921, N1004, N1010, N1034, N1072, N1113, N1178, N1194, N1240, N1269, N1336, N1348, N1382, N1450, N1455, N1474, N1518, N1541, N1554, N1563, N1647, N1661, N1733, N1791, N1834, N1867, and N1880 each carry an N-linked (GlcNAc...) asparagine glycan. 15 PKD domains span residues 855–928 (ATAT…RVTA), 935–1020 (LRAT…NRMQ), 1023–1129 (QVST…LPSV), 1127–1215 (PSVA…LRGL), 1213–1298 (RGLS…EVLR), 1294–1383 (LEVL…VGNV), 1382–1469 (NVTL…VLVT), 1468–1551 (VTSI…VRGL), 1550–1635 (GLVV…IEGL), 1634–1721 (GLQV…VGWL), 1719–1805 (GWLM…VSGL), 1807–1890 (IRAS…IVGL), 1889–1974 (GLVL…VSGL), 1977–2057 (PNCC…VLEV), and 2060–2148 (AVQY…ACRE). N1991, N2050, N2074, N2125, N2248, N2353, N2395, N2412, N2567, N2578, N2645, N2718, N2754, N2841, N2878, N2925, N2956, and N2994 each carry an N-linked (GlcNAc...) asparagine glycan. In terms of domain architecture, REJ spans 2146–2833 (CREPEVDVVL…QLIFLVDSNP (688 aa)). Positions 2862-3063 (PIERLASERA…SLFVPPSHVR (202 aa)) constitute a GAIN-B domain. A disulfide bridge links C3015 with C3043. The tract at residues 3015–3063 (CQYFSEEDMVWRTEGLLPLEETSPRQAVCLTRHLTAFGASLFVPPSHVR) is GPS. Residues 3075–3095 (YIVMLTCAVCLVTYMVMAAIL) form a helical membrane-spanning segment. Residues 3096-3277 (HKLDQLDASR…DRPPRSRFTR (182 aa)) are Cytoplasmic-facing. A PLAT domain is found at 3118 to 3233 (FKYEILVKTG…EANGGLVEKE (116 aa)). A helical transmembrane segment spans residues 3278 to 3298 (IQRATCCVLLICLFLGANAVW). Over 3299–3323 (YGAVGDSAYSTGHVSRLSPLSVDTV) the chain is Extracellular. The helical transmembrane segment at 3324 to 3344 (AVGLVSSVVVYPVYLAILFLF) threads the bilayer. Residues 3345 to 3559 (RMSRSKVAGS…LPAWCASLAH (215 aa)) lie on the Cytoplasmic side of the membrane. Residues 3560-3580 (GLSLLLVAVAVAVSGWVGASF) form a helical membrane-spanning segment. Residues 3581–3582 (PP) lie on the Extracellular side of the membrane. A helical transmembrane segment spans residues 3583–3603 (GVSVAWLLSSSASFLASFLGW). Over 3604 to 3665 (EPLKVLLEAL…LAKEEARKVK (62 aa)) the chain is Cytoplasmic. The chain crosses the membrane as a helical span at residues 3666–3686 (RLHGMLRSLLVYMLFLLVTLL). Residues 3687–3901 (ASYGDASCHG…RLSAGLSLPL (215 aa)) lie on the Extracellular side of the membrane. Residues N3738, N3790, and N3845 are each glycosylated (N-linked (GlcNAc...) asparagine). A helical membrane pass occupies residues 3902 to 3922 (LTSVCLLLFAVHFAVAEARTW). Residues 3923–3935 (HREGRWRVLRLGA) lie on the Cytoplasmic side of the membrane. A helical membrane pass occupies residues 3936–3956 (WARWLLVALTAATALVRLAQL). Residues 3957–3984 (GAADRQWTRFVRGRPRRFTSFDQVAQLS) are Extracellular-facing. The helical transmembrane segment at 3985–4005 (SAARGLAASLLFLLLVKAAQQ) threads the bilayer. Topologically, residues 4006-4027 (LRFVRQWSVFGKTLCRALPELL) are cytoplasmic. The chain crosses the membrane as a helical span at residues 4028–4048 (GVTLGLVVLGVAYAQLAILLV). The Extracellular segment spans residues 4049-4090 (SSCVDSLWSVAQALLVLCPGTGLSTLCPAESWHLSPLLCVGL). Residues 4091–4110 (WALRLWGALRLGAVILRWRY) form a helical membrane-spanning segment. The Cytoplasmic segment spans residues 4111 to 4303 (HALRGELYRP…AKNKVHPSST (193 aa)). 2 disordered regions span residues 4160 to 4196 (PLPS…QLDG) and 4243 to 4303 (LHSL…PSST). Position 4166 is a phosphoserine; by PRKX; in vitro (S4166). Residues 4185–4195 (SHPSTSSSQLD) are compositionally biased toward polar residues. The stretch at 4220–4251 (EALLTQFDRLNQATEDVYQLEQQLHSLQGRRS) forms a coiled coil. A compositionally biased stretch (low complexity) spans 4253 to 4269 (RAPAGSSRGPSPGLRPA). The span at 4292 to 4303 (LRAKNKVHPSST) shows a compositional bias: basic residues.

Belongs to the polycystin family. In terms of assembly, component of the heterotetrameric polycystin channel complex with PKD2; the tetramer contains one PKD1 chain and three PKD2 chains. Interacts with PKD2; the interaction is required for ciliary localization. Interacts with PKD2L1. Interacts with PRKX; involved in differentiation and controlled morphogenesis of the kidney. Interacts (via extracellular domain) with WNT3A, WNT4, WNT5A and WNT9B. Interacts with DVL1 and DVL2. Interacts with NPHP1 (via SH3 domain). Interacts with BBS1, BBS4, BBS5 and TTC8. Interacts with RGS7. Interacts (via the PKD repeats in the N-terminal extracellular region) with EPCIP; the interaction is not dependent on N-glycosylation of either protein. In terms of processing, N-glycosylated. After synthesis, undergoes cleavage between Leu-3048 and Thr-3049 in the GPS region of the GAIN-B domain. Cleavage at the GPS region occurs through a cis-autoproteolytic mechanism involving an ester-intermediate via N-O acyl rearrangement. This process takes place in the early secretory pathway, depends on initial N-glycosylation, and requires the REJ domain. There is evidence that cleavage at GPS region is incomplete. Uncleaved and cleaved products may have different functions in vivo.

The protein resides in the cell membrane. The protein localises to the cell projection. Its subcellular location is the cilium. It localises to the endoplasmic reticulum. It is found in the golgi apparatus. The protein resides in the vesicle. The protein localises to the secreted. Its subcellular location is the extracellular exosome. Its function is as follows. Component of a heteromeric calcium-permeable ion channel formed by PKD1 and PKD2 that is activated by interaction between PKD1 and a Wnt family member, such as WNT3A and WNT9B. Both PKD1 and PKD2 are required for channel activity. Involved in renal tubulogenesis. Involved in fluid-flow mechanosensation by the primary cilium in renal epithelium. Acts as a regulator of cilium length, together with PKD2. The dynamic control of cilium length is essential in the regulation of mechanotransductive signaling. The cilium length response creates a negative feedback loop whereby fluid shear-mediated deflection of the primary cilium, which decreases intracellular cAMP, leads to cilium shortening and thus decreases flow-induced signaling. May be an ion-channel regulator. Involved in adhesive protein-protein and protein-carbohydrate interactions. Likely to be involved with polycystin-1-interacting protein 1 in the detection, sequestration and exocytosis of senescent mitochondria. This chain is Polycystin-1, found in Homo sapiens (Human).